The chain runs to 170 residues: Adenine phosphoribosyltransferase (170 aa).

It belongs to the purine/pyrimidine phosphoribosyltransferase family. As to quaternary structure, homodimer.

Its subcellular location is the cytoplasm. It carries out the reaction AMP + diphosphate = 5-phospho-alpha-D-ribose 1-diphosphate + adenine. Its pathway is purine metabolism; AMP biosynthesis via salvage pathway; AMP from adenine: step 1/1. Catalyzes a salvage reaction resulting in the formation of AMP, that is energically less costly than de novo synthesis. In Streptococcus pneumoniae (strain Taiwan19F-14), this protein is Adenine phosphoribosyltransferase.